The sequence spans 580 residues: Probable inactive 1-aminocyclopropane-1-carboxylate synthase-like protein 2 (580 aa).

The interval 1-43 is disordered; the sequence is MSENRNEGSSQAAKANSDTQTPSHFKVTHPRLRDQLKKKSSKK. Residues 7–23 are compositionally biased toward polar residues; the sequence is EGSSQAAKANSDTQTPS. N6-(pyridoxal phosphate)lysine is present on K417.

This sequence belongs to the class-I pyridoxal-phosphate-dependent aminotransferase family.

The polypeptide is Probable inactive 1-aminocyclopropane-1-carboxylate synthase-like protein 2 (Accsl) (Mus musculus (Mouse)).